The following is a 139-amino-acid chain: Peptide methionine sulfoxide reductase B4 (139 aa).

Alanine 2 is modified (N-acetylalanine). The 122-residue stretch at 12 to 133 folds into the MsrB domain; that stretch reads EEEWRAVLSP…NSVSINFNPA (122 aa). Residues cysteine 51, cysteine 54, cysteine 97, and cysteine 100 each coordinate Zn(2+). Cysteine 69 and cysteine 122 are joined by a disulfide. The Nucleophile role is filled by cysteine 122.

The protein belongs to the MsrB Met sulfoxide reductase family. Zn(2+) is required as a cofactor.

It is found in the cytoplasm. The protein resides in the cytosol. The catalysed reaction is L-methionyl-[protein] + [thioredoxin]-disulfide + H2O = L-methionyl-(R)-S-oxide-[protein] + [thioredoxin]-dithiol. In terms of biological role, catalyzes the reduction of methionine sulfoxide (MetSO) to methionine in proteins. Plays a protective role against oxidative stress by restoring activity to proteins that have been inactivated by methionine oxidation. MSRB family specifically reduces the MetSO R-enantiomer. The sequence is that of Peptide methionine sulfoxide reductase B4 (MSRB4) from Arabidopsis thaliana (Mouse-ear cress).